Reading from the N-terminus, the 318-residue chain is Aspartate carbamoyltransferase catalytic subunit (318 aa).

2 residues coordinate carbamoyl phosphate: Arg-64 and Thr-65. An L-aspartate-binding site is contributed by Lys-92. Carbamoyl phosphate-binding residues include Arg-114, His-142, and Gln-145. Arg-175 and Arg-229 together coordinate L-aspartate. Residues Gly-270 and Pro-271 each coordinate carbamoyl phosphate.

The protein belongs to the aspartate/ornithine carbamoyltransferase superfamily. ATCase family. As to quaternary structure, heterododecamer (2C3:3R2) of six catalytic PyrB chains organized as two trimers (C3), and six regulatory PyrI chains organized as three dimers (R2).

It carries out the reaction carbamoyl phosphate + L-aspartate = N-carbamoyl-L-aspartate + phosphate + H(+). It participates in pyrimidine metabolism; UMP biosynthesis via de novo pathway; (S)-dihydroorotate from bicarbonate: step 2/3. In terms of biological role, catalyzes the condensation of carbamoyl phosphate and aspartate to form carbamoyl aspartate and inorganic phosphate, the committed step in the de novo pyrimidine nucleotide biosynthesis pathway. This is Aspartate carbamoyltransferase catalytic subunit from Rhodospirillum centenum (strain ATCC 51521 / SW).